The primary structure comprises 195 residues: Ras-related protein Rab-31 (195 aa).

Residues G16, G18, K19, S20, S21, D32, and H33 each coordinate GTP. Position 20 (S20) interacts with Mg(2+). 2 short sequence motifs (switch) span residues 30-42 (HFDHNISPTIGAS) and 63-79 (AGQERFHSLAPMYYRGS). S36 is subject to Phosphoserine. 6 residues coordinate GTP: T38, G64, N119, D122, A150, and K151. Position 38 (T38) interacts with Mg(2+). 2 S-geranylgeranyl cysteine lipidation sites follow: C194 and C195.

This sequence belongs to the small GTPase superfamily. Rab family. As to quaternary structure, interacts (in GDP-bound form) with RIN3 and GAPVD1, which function as guanine exchange factors (GEF). Interacts (in GTP-bound form) with EEA1. Interacts with NGFR. Interacts with EGFR. Interacts with OCRL. Interacts (in GTP-bound form) with APPL2; interaction contributes to or enhances recruitment of APPL2 to the phagosomes; interaction enhances Fc-gamma receptor-mediated phagocytosis through PI3K/Akt signaling in macrophages. Mg(2+) is required as a cofactor. As to expression, detected in brain astrocytes, spleen and intestine (at protein level).

It is found in the early endosome. It localises to the golgi apparatus. Its subcellular location is the trans-Golgi network. The protein localises to the trans-Golgi network membrane. The protein resides in the cytoplasmic vesicle. It is found in the phagosome. It localises to the phagosome membrane. It carries out the reaction GTP + H2O = GDP + phosphate + H(+). With respect to regulation, regulated by guanine nucleotide exchange factors (GEFs) including RIN3 and GAPVD1 which promote the exchange of bound GDP for free GTP. Regulated by GTPase activating proteins (GAPs) which increase the GTP hydrolysis activity. Inhibited by GDP dissociation inhibitors (GDIs) which prevent Rab-GDP dissociation. Functionally, the small GTPases Rab are key regulators of intracellular membrane trafficking, from the formation of transport vesicles to their fusion with membranes. Rabs cycle between an inactive GDP-bound form and an active GTP-bound form that is able to recruit to membranes different set of downstream effectors directly responsible for vesicle formation, movement, tethering and fusion. Required for the integrity and for normal function of the Golgi apparatus and the trans-Golgi network. Plays a role in insulin-stimulated translocation of GLUT4 to the cell membrane. Plays a role in the maturation of phagosomes that engulf pathogens, such as S.aureus and Mycobacterium. Plays a role in M6PR transport from the trans-Golgi network to endosomes. Plays a role in the internalization of EGFR from the cell membrane into endosomes. The chain is Ras-related protein Rab-31 from Rattus norvegicus (Rat).